The chain runs to 273 residues: Fos-related antigen 1 (273 aa).

Disordered stretches follow at residues 1–46 (MYRD…IDSS) and 60–114 (GPTG…RRER). Positions 7–35 (EPGPSSGAGSPYGRPAQPPQAQAQTAQQQ) are enriched in low complexity. The bZIP domain maps to 105 to 168 (EERRRVRRER…ERLELVLEAH (64 aa)). The interval 107-127 (RRRVRRERNKLAAAKCRNRRK) is basic motif. Residues 133 to 161 (LQAETDKLEDEKSGLQREIEELQKQKERL) are leucine-zipper. Residues 169–182 (RPICKIPEGDKKDP) are compositionally biased toward basic and acidic residues. Residues 169 to 273 (RPICKIPEGD…PLGSPTLLAL (105 aa)) form a disordered region. Composition is skewed to low complexity over residues 217-235 (LHTPTLMTTPSLTPFTPSL) and 254-273 (SSSSGDPSSDPLGSPTLLAL). Position 267 is a phosphoserine (Ser267).

This sequence belongs to the bZIP family. Fos subfamily. Heterodimer. Interacts with the BAF multiprotein chromatin-remodeling complex subunits SMARCB1 and SMARCD1. Interacts with ARID1A and JUN.

Its subcellular location is the nucleus. The protein is Fos-related antigen 1 (Fosl1) of Mus musculus (Mouse).